The primary structure comprises 199 residues: Holliday junction branch migration complex subunit RuvA (199 aa).

A domain I region spans residues Met-1 to Ser-63. The tract at residues Asp-64–Ala-142 is domain II. The tract at residues Ala-143–Val-150 is flexible linker. Residues Val-150–Lys-199 form a domain III region.

The protein belongs to the RuvA family. Homotetramer. Forms an RuvA(8)-RuvB(12)-Holliday junction (HJ) complex. HJ DNA is sandwiched between 2 RuvA tetramers; dsDNA enters through RuvA and exits via RuvB. An RuvB hexamer assembles on each DNA strand where it exits the tetramer. Each RuvB hexamer is contacted by two RuvA subunits (via domain III) on 2 adjacent RuvB subunits; this complex drives branch migration. In the full resolvosome a probable DNA-RuvA(4)-RuvB(12)-RuvC(2) complex forms which resolves the HJ.

It localises to the cytoplasm. Its function is as follows. The RuvA-RuvB-RuvC complex processes Holliday junction (HJ) DNA during genetic recombination and DNA repair, while the RuvA-RuvB complex plays an important role in the rescue of blocked DNA replication forks via replication fork reversal (RFR). RuvA specifically binds to HJ cruciform DNA, conferring on it an open structure. The RuvB hexamer acts as an ATP-dependent pump, pulling dsDNA into and through the RuvAB complex. HJ branch migration allows RuvC to scan DNA until it finds its consensus sequence, where it cleaves and resolves the cruciform DNA. The sequence is that of Holliday junction branch migration complex subunit RuvA from Acinetobacter baumannii (strain AB307-0294).